A 261-amino-acid polypeptide reads, in one-letter code: ATP synthase subunit a (261 aa).

The next 6 helical transmembrane spans lie at 45 to 65 (ITNVTMWMAIAVLVIAAILVL), 107 to 127 (VMTLFLFVLCGNVLGLLPLSF), 133 to 153 (MAVTVPLALMVFVGVTALGFM), 162 to 182 (MFWVTSAPLAIRPVLAVIEVI), 209 to 229 (IAGFASIVVVSPVVVGAVTAI), and 232 to 252 (LELLVAVVQAYVFTILTCVYL).

The protein belongs to the ATPase A chain family. As to quaternary structure, F-type ATPases have 2 components, CF(1) - the catalytic core - and CF(0) - the membrane proton channel. CF(1) has five subunits: alpha(3), beta(3), gamma(1), delta(1), epsilon(1). CF(0) has four main subunits: a, b, b' and c.

It localises to the cell inner membrane. Functionally, key component of the proton channel; it plays a direct role in the translocation of protons across the membrane. The protein is ATP synthase subunit a of Cereibacter sphaeroides (strain ATCC 17029 / ATH 2.4.9) (Rhodobacter sphaeroides).